Here is a 97-residue protein sequence, read N- to C-terminus: uncharacterized protein (97 aa).

The 94-residue stretch at 2 to 95 (IRHLVLFKLN…EFATWVIADY (94 aa)) folds into the Stress-response A/B barrel domain.

This is an uncharacterized protein from Streptomyces coelicolor (strain ATCC BAA-471 / A3(2) / M145).